The primary structure comprises 680 residues: Methionine--tRNA ligase (680 aa).

The 'HIGH' region motif lies at 15–25 (PYANGPVHIGH). Zn(2+) is bound by residues Cys-147, Cys-150, Cys-160, and Cys-163. The 'KMSKS' region motif lies at 332 to 336 (KISTS). Residue Thr-335 coordinates ATP. A tRNA-binding domain is found at 579 to 680 (DFLKLDIRVG…AEVAAGSQVK (102 aa)).

Belongs to the class-I aminoacyl-tRNA synthetase family. MetG type 1 subfamily. Homodimer. Zn(2+) is required as a cofactor.

The protein resides in the cytoplasm. The catalysed reaction is tRNA(Met) + L-methionine + ATP = L-methionyl-tRNA(Met) + AMP + diphosphate. Functionally, is required not only for elongation of protein synthesis but also for the initiation of all mRNA translation through initiator tRNA(fMet) aminoacylation. The chain is Methionine--tRNA ligase from Porphyromonas gingivalis (strain ATCC BAA-308 / W83).